We begin with the raw amino-acid sequence, 467 residues long: Probable citrate synthase 2, mitochondrial (467 aa).

Active-site residues include histidine 303, histidine 349, and aspartate 404.

Belongs to the citrate synthase family. As to quaternary structure, homodimer.

The protein localises to the mitochondrion matrix. It catalyses the reaction oxaloacetate + acetyl-CoA + H2O = citrate + CoA + H(+). It functions in the pathway carbohydrate metabolism; tricarboxylic acid cycle; isocitrate from oxaloacetate: step 1/2. This is Probable citrate synthase 2, mitochondrial from Aedes aegypti (Yellowfever mosquito).